The following is a 57-amino-acid chain: uncharacterized protein (57 aa).

Residues 12–34 (VIAVLSLFVFAVAVFFVGMALLT) traverse the membrane as a helical segment.

It localises to the membrane. This is an uncharacterized protein from Pasteurella multocida (strain Pm70).